A 46-amino-acid polypeptide reads, in one-letter code: Diuretic hormone class 1 (46 aa).

Ile46 is modified (isoleucine amide).

It is found in the secreted. Regulation of fluid secretion. Stimulates primary urine secretion by Malpighian tubules and causes a dose-dependent stimulation of cAMP levels in the tubules. Has a greater effect on the transport of Na(+) then K(+) ions. In vitro, has synergistic effects with the smaller diuretic hormone DH(31) which co-occurs with it. The chain is Diuretic hormone class 1 from Diploptera punctata (Pacific beetle cockroach).